The chain runs to 368 residues: Cell division protein FtsZ 1 (368 aa).

GTP-binding positions include 52–56 (GGGCN), 139–141 (GTG), glutamate 170, arginine 174, and aspartate 217.

This sequence belongs to the FtsZ family. In terms of assembly, homodimer. Polymerizes to form a dynamic ring structure in a strictly GTP-dependent manner. Interacts directly with several other division proteins.

The protein resides in the cytoplasm. Essential cell division protein that forms a contractile ring structure (Z ring) at the future cell division site. The regulation of the ring assembly controls the timing and the location of cell division. One of the functions of the FtsZ ring is to recruit other cell division proteins to the septum to produce a new cell wall between the dividing cells. Binds GTP and shows GTPase activity. The sequence is that of Cell division protein FtsZ 1 from Archaeoglobus fulgidus (strain ATCC 49558 / DSM 4304 / JCM 9628 / NBRC 100126 / VC-16).